The primary structure comprises 165 residues: Transcription antitermination protein NusB (165 aa).

Residues 139–165 (EAVRSHRRNKRPAADKPVATDKPAAAE) form a disordered region.

This sequence belongs to the NusB family.

Involved in transcription antitermination. Required for transcription of ribosomal RNA (rRNA) genes. Binds specifically to the boxA antiterminator sequence of the ribosomal RNA (rrn) operons. In Laribacter hongkongensis (strain HLHK9), this protein is Transcription antitermination protein NusB.